Consider the following 555-residue polypeptide: Formate--tetrahydrofolate ligase (555 aa).

65–72 serves as a coordination point for ATP; it reads TPAGEGKT.

The protein belongs to the formate--tetrahydrofolate ligase family.

It carries out the reaction (6S)-5,6,7,8-tetrahydrofolate + formate + ATP = (6R)-10-formyltetrahydrofolate + ADP + phosphate. It functions in the pathway one-carbon metabolism; tetrahydrofolate interconversion. The protein is Formate--tetrahydrofolate ligase of Caldanaerobacter subterraneus subsp. tengcongensis (strain DSM 15242 / JCM 11007 / NBRC 100824 / MB4) (Thermoanaerobacter tengcongensis).